Reading from the N-terminus, the 72-residue chain is Translation initiation factor IF-1 (72 aa).

An S1-like domain is found at 1–72 (MAKDDVIQMQ…SRARIVFRAK (72 aa)).

Belongs to the IF-1 family. In terms of assembly, component of the 30S ribosomal translation pre-initiation complex which assembles on the 30S ribosome in the order IF-2 and IF-3, IF-1 and N-formylmethionyl-tRNA(fMet); mRNA recruitment can occur at any time during PIC assembly.

The protein localises to the cytoplasm. In terms of biological role, one of the essential components for the initiation of protein synthesis. Stabilizes the binding of IF-2 and IF-3 on the 30S subunit to which N-formylmethionyl-tRNA(fMet) subsequently binds. Helps modulate mRNA selection, yielding the 30S pre-initiation complex (PIC). Upon addition of the 50S ribosomal subunit IF-1, IF-2 and IF-3 are released leaving the mature 70S translation initiation complex. In Burkholderia mallei (strain NCTC 10247), this protein is Translation initiation factor IF-1.